The chain runs to 356 residues: Cyanide hydratase (356 aa).

Residues 6–285 enclose the CN hydrolase domain; that stretch reads YKAAAVTSEP…DGLLFVDIDL (280 aa). Catalysis depends on Glu46, which acts as the Proton acceptor. Lys128 is a catalytic residue. Cys163 serves as the catalytic Nucleophile.

It belongs to the carbon-nitrogen hydrolase superfamily. Nitrilase family. As to quaternary structure, oligomer of dimers, forming left-handed helical fibers.

The catalysed reaction is formamide = hydrogen cyanide + H2O. Its function is as follows. Catalyzes the hydration of cyanide to formamide. Degradation of cyanide may be important for plant pathogenic fungi in infection of cyanogenic plants. The protein is Cyanide hydratase of Leptosphaeria maculans (Blackleg fungus).